Here is a 297-residue protein sequence, read N- to C-terminus: Taste receptor type 2 member 4 (297 aa).

At 1-11 (MLWELYVFVFA) the chain is on the extracellular side. A helical membrane pass occupies residues 12–32 (ASVFLNFVGIIANLFIIVIII). The Cytoplasmic portion of the chain corresponds to 33-46 (KTWVNSRRIASPDR). The chain crosses the membrane as a helical span at residues 47–67 (ILFSLAITRFLTLGLFLLNSV). The Extracellular segment spans residues 68-80 (YIATNTGRSVYFS). Residues 81–101 (TFFLLCWKFLDANSLWLVTIL) form a helical membrane-spanning segment. The Cytoplasmic segment spans residues 102–128 (NSLYCVKITNFQHPVFLLLKRTISMKT). A helical membrane pass occupies residues 129–149 (TSLLLACLLISALTTLLYYML). Over 150–171 (SQISRFPEHIIGRNDTSFDLSD) the chain is Extracellular. The N-linked (GlcNAc...) asparagine glycan is linked to Asn-163. The chain crosses the membrane as a helical span at residues 172–192 (GILTLVASLVLNSLLQFMLNV). Over 193–229 (TFASLLIHSLRRHIQKMQRNRTSFWNPQTEAHMGAMR) the chain is Cytoplasmic. Residues 230–250 (LMICFLVLYIPYSIATLLYLP) form a helical membrane-spanning segment. Residues 251–260 (SYMRKNLRAQ) are Extracellular-facing. Residues 261-281 (AICMIITAAYPPGHSVLLIIT) form a helical membrane-spanning segment. The Cytoplasmic portion of the chain corresponds to 282–297 (HHKLKAKAKKIFCFYK).

This sequence belongs to the G-protein coupled receptor T2R family. As to expression, expressed in subsets of taste receptor cells of the tongue and palate epithelium and exclusively in gustducin-positive cells. Expressed in 15% taste bud cells in circumvallate and foliate papillae but only in 2% in fungiform papillae.

It localises to the membrane. Its subcellular location is the cell projection. It is found in the cilium membrane. Its function is as follows. Gustducin-coupled receptor for denatonium and N(6)-propyl-2-thiouracil implicated in the perception of bitter compounds in the oral cavity and the gastrointestinal tract. Signals through PLCB2 and the calcium-regulated cation channel TRPM5. In airway epithelial cells, binding of denatonium increases the intracellular calcium ion concentration and stimulates ciliary beat frequency. This is Taste receptor type 2 member 4 (Tas2r4) from Mus musculus (Mouse).